The sequence spans 409 residues: Beta-glucanase (409 aa).

A signal peptide spans 1–31 (MRKNRGFSFSSKAVMMCCLAFLLIPASFAFA). Glu-95 acts as the Proton donor in catalysis. Asp-156 functions as the Nucleophile in the catalytic mechanism.

Belongs to the glycosyl hydrolase 8 (cellulase D) family.

It carries out the reaction Hydrolysis of (1-&gt;4)-beta-D-glucosidic linkages in beta-D-glucans containing (1-&gt;3)- and (1-&gt;4)-bonds.. The polypeptide is Beta-glucanase (bgc) (Niallia circulans (Bacillus circulans)).